A 944-amino-acid chain; its full sequence is Neutral alpha-glucosidase AB (944 aa).

Positions 1 to 32 (MAAVAAVAARRRRSWTGLVLACLGVCLGLTLA) are cleaved as a signal peptide. Residues C41 and C47 are joined by a disulfide bond. S52 carries the phosphoserine modification. N97 carries N-linked (GlcNAc...) asparagine glycosylation. Positions 181 to 225 (QRAPRVSQGSKDPAEGDGAQPEEAPGDGDKPEEIQGKAEKDEPGA) are disordered. Over residues 207 to 225 (DGDKPEEIQGKAEKDEPGA) the composition is skewed to basic and acidic residues. D283 and D429 together coordinate substrate. D542 functions as the Nucleophile in the catalytic mechanism. R602 contributes to the substrate binding site. D618 serves as the catalytic Proton donor. The cysteines at positions 633 and 644 are disulfide-linked. H676 lines the substrate pocket.

The protein belongs to the glycosyl hydrolase 31 family. As to quaternary structure, heterodimer of a catalytic alpha subunit (GANAB) and a beta subunit (PRKCSH). Binds glycosylated PTPRC. In terms of processing, contains sialylated polysaccharide chains.

The protein localises to the endoplasmic reticulum. It localises to the golgi apparatus. It is found in the melanosome. The catalysed reaction is N(4)-(alpha-D-Glc-(1-&gt;3)-alpha-D-Man-(1-&gt;2)-alpha-D-Man-(1-&gt;2)-alpha-D-Man-(1-&gt;3)-[alpha-D-Man-(1-&gt;2)-alpha-D-Man-(1-&gt;3)-[alpha-D-Man-(1-&gt;2)-alpha-D-Man-(1-&gt;6)]-alpha-D-Man-(1-&gt;6)]-beta-D-Man-(1-&gt;4)-beta-D-GlcNAc-(1-&gt;4)-beta-D-GlcNAc)-L-asparaginyl-[protein] + H2O = N(4)-(alpha-D-Man-(1-&gt;2)-alpha-D-Man-(1-&gt;2)-alpha-D-Man-(1-&gt;3)-[alpha-D-Man-(1-&gt;2)-alpha-D-Man-(1-&gt;3)-[alpha-D-Man-(1-&gt;2)-alpha-D-Man-(1-&gt;6)]-alpha-D-Man-(1-&gt;6)]-beta-D-Man-(1-&gt;4)-beta-D-GlcNAc-(1-&gt;4)-beta-D-GlcNAc)-L-asparaginyl-[protein] (N-glucan mannose isomer 9A1,2,3B1,2,3) + beta-D-glucose. It catalyses the reaction N(4)-(alpha-D-Glc-(1-&gt;3)-alpha-D-Glc-(1-&gt;3)-alpha-D-Man-(1-&gt;2)-alpha-D-Man-(1-&gt;2)-alpha-D-Man-(1-&gt;3)-[alpha-D-Man-(1-&gt;2)-alpha-D-Man-(1-&gt;3)-[alpha-D-Man-(1-&gt;2)-alpha-D-Man-(1-&gt;6)]-alpha-D-Man-(1-&gt;6)]-beta-D-Man-(1-&gt;4)-beta-D-GlcNAc-(1-&gt;4)-beta-D-GlcNAc)-L-asparaginyl-[protein] + H2O = N(4)-(alpha-D-Glc-(1-&gt;3)-alpha-D-Man-(1-&gt;2)-alpha-D-Man-(1-&gt;2)-alpha-D-Man-(1-&gt;3)-[alpha-D-Man-(1-&gt;2)-alpha-D-Man-(1-&gt;3)-[alpha-D-Man-(1-&gt;2)-alpha-D-Man-(1-&gt;6)]-alpha-D-Man-(1-&gt;6)]-beta-D-Man-(1-&gt;4)-beta-D-GlcNAc-(1-&gt;4)-beta-D-GlcNAc)-L-asparaginyl-[protein] + beta-D-glucose. It participates in glycan metabolism; N-glycan metabolism. Its function is as follows. Catalytic subunit of glucosidase II that cleaves sequentially the 2 innermost alpha-1,3-linked glucose residues from the Glc(2)Man(9)GlcNAc(2) oligosaccharide precursor of immature glycoproteins. Required for PKD1/Polycystin-1 and PKD2/Polycystin-2 maturation and localization to the cell surface and cilia. The protein is Neutral alpha-glucosidase AB (GANAB) of Sus scrofa (Pig).